The following is a 578-amino-acid chain: Zinc finger protein 248 (578 aa).

In terms of domain architecture, KRAB spans 8–78 (VSFKDVCVDF…LEKGFPSQDP (71 aa)). The segment at 239 to 263 (TVCKYNECGRTFIESLKLNISQRPH) adopts a C2H2-type 1; degenerate zinc-finger fold. A Glycyl lysine isopeptide (Lys-Gly) (interchain with G-Cter in SUMO2) cross-link involves residue Lys340. 7 consecutive C2H2-type zinc fingers follow at residues 379-401 (FECG…QRTH), 407-429 (YECT…QRTH), 435-457 (YECK…QRTH), 463-485 (YECN…QRTH), 491-513 (FICN…QRTH), 519-542 (YKCN…RTHT), and 547-569 (YECN…QRIH).

The protein belongs to the krueppel C2H2-type zinc-finger protein family.

It localises to the nucleus. In terms of biological role, may be involved in transcriptional regulation. The polypeptide is Zinc finger protein 248 (ZNF248) (Pongo abelii (Sumatran orangutan)).